Here is a 381-residue protein sequence, read N- to C-terminus: Glycerol-3-phosphate dehydrogenase [NAD(+)] (381 aa).

The disordered stretch occupies residues 1-27 (MTAMDRLDHVSNQLAAKRQKKNPEGKP). Residues 34–39 (GSGNWG), F66, and F122 contribute to the NAD(+) site. K145 contributes to the substrate binding site. A178 lines the NAD(+) pocket. K238 (proton acceptor) is an active-site residue. NAD(+)-binding residues include R303 and Q332. 303 to 304 (RN) contributes to the substrate binding site.

Belongs to the NAD-dependent glycerol-3-phosphate dehydrogenase family.

It catalyses the reaction sn-glycerol 3-phosphate + NAD(+) = dihydroxyacetone phosphate + NADH + H(+). The chain is Glycerol-3-phosphate dehydrogenase [NAD(+)] (GPD) from Pichia angusta (Yeast).